The following is a 384-amino-acid chain: 5-cytosine rRNA methyltransferase NSUN4 (384 aa).

The transit peptide at 1–25 (MAALTLRGVRELLKRVDLATVPRRH) directs the protein to the mitochondrion. Residues Gly185, Gly186, Lys187, and Asp204 each contribute to the S-adenosyl-L-methionine site. Ser206 carries the post-translational modification Phosphoserine. Arg209, Asp237, Gly238, and Asp255 together coordinate S-adenosyl-L-methionine. The active-site Nucleophile is the Cys310.

Belongs to the class I-like SAM-binding methyltransferase superfamily. RsmB/NOP family. As to quaternary structure, heterodimer with MTERFD2/MTERF4; this interaction seems to be required for NSUN4 recruitment to the mitochondrial large ribosomal subunit.

Its subcellular location is the mitochondrion. It carries out the reaction a cytidine in rRNA + S-adenosyl-L-methionine = a 5-methylcytidine in rRNA + S-adenosyl-L-homocysteine + H(+). The catalysed reaction is a cytidine in mRNA + S-adenosyl-L-methionine = a 5-methylcytidine in mRNA + S-adenosyl-L-homocysteine + H(+). In terms of biological role, mitochondrial RNA cytosine C(5)-methyltransferase that methylates cytosine to 5-methylcytosine (m5C) in various RNAs, such as rRNAs, mRNAs and some long non-coding RNAs (lncRNAs). Involved in mitochondrial ribosome small subunit (SSU) maturation by catalyzing methylation of mitochondrial 12S rRNA; the function is independent of MTERFD2/MTERF4 and assembled mitochondrial ribosome large subunit (LSU). Targeted to LSU by MTERFD2/MTERF4 and probably is involved in a final step in ribosome biogenesis to ensure that SSU and LSU are assembled. In vitro can methylate 16S rRNA of the LSU; the methylation is enhanced by MTERFD/MTERF4. Also acts as a regulator of innate immunity by marking double-stranded mitochondrial RNAs(mt-dsRNAs) generated in response to stress: catalyzes m5C modification on mitochondrial RNAs, such as a mRNAs and lncRNAs, with a preference for the termini of light-strand lncRNAs, promoting their degradation and cytosolic release. Modified light-strand lncRNAs are then recognized by C1QBP reader and recruited to the mitochondrial degradosome complex, which promotes their degradation. This Homo sapiens (Human) protein is 5-cytosine rRNA methyltransferase NSUN4.